The sequence spans 905 residues: DNA mismatch repair protein MutS (905 aa).

The interval lysine 272–proline 292 is disordered. Glycine 654–serine 661 is an ATP binding site.

This sequence belongs to the DNA mismatch repair MutS family.

Functionally, this protein is involved in the repair of mismatches in DNA. It is possible that it carries out the mismatch recognition step. This protein has a weak ATPase activity. The sequence is that of DNA mismatch repair protein MutS from Rhodopseudomonas palustris (strain BisB18).